Consider the following 383-residue polypeptide: BRISC and BRCA1-A complex member 2 (383 aa).

The residue at position 1 (M1) is an N-acetylmethionine. S2 is modified (phosphoserine). UEV-like regions lie at residues 30-147 (DATN…TLLE) and 275-364 (IAAF…RAKA).

The protein belongs to the BABAM2 family. Component of the ARISC complex, at least composed of UIMC1/RAP80, ABRAXAS1, BRCC3/BRCC36, BABAM2 and BABAM1/NBA1. Component of the BRCA1-A complex, at least composed of BRCA1, BARD1, UIMC1/RAP80, ABRAXAS1, BRCC3/BRCC36, BABAM2 and BABAM1/NBA1. In the BRCA1-A complex, interacts directly with ABRAXAS1, BRCC3/BRCC36 and BABAM1/NBA1. Binds polyubiquitin. Component of the BRISC complex, at least composed of ABRAXAS2, BRCC3/BRCC36, BABAM2 and BABAM1/NBA1. Identified in a complex with SHMT2 and the other subunits of the BRISC complex. Component of the BRCA1/BRCA2 containing complex (BRCC), which also contains BRCA1, BRCA2, BARD1, BRCC3/BRCC36 and RAD51. BRCC is a ubiquitin E3 ligase complex that enhances cellular survival following DNA damage. May interact with FAS and TNFRSF1A. Expressed in brain, heart, kidney, liver, lung, testis, germinal center B-cells and various mouse cell lines.

It is found in the cytoplasm. Its subcellular location is the nucleus. In terms of biological role, component of the BRCA1-A complex, a complex that specifically recognizes 'Lys-63'-linked ubiquitinated histones H2A and H2AX at DNA lesions sites, leading to target the BRCA1-BARD1 heterodimer to sites of DNA damage at double-strand breaks (DSBs). The BRCA1-A complex also possesses deubiquitinase activity that specifically removes 'Lys-63'-linked ubiquitin on histones H2A and H2AX. In the BRCA1-A complex, it acts as an adapter that bridges the interaction between BABAM1/NBA1 and the rest of the complex, thereby being required for the complex integrity and modulating the E3 ubiquitin ligase activity of the BRCA1-BARD1 heterodimer. Probably also plays a role as a component of the BRISC complex, a multiprotein complex that specifically cleaves 'Lys-63'-linked ubiquitin. May regulate TNF-alpha signaling through its interactions with TNFRSF1A. Functionally, component of the BRCA1-A complex, a complex that specifically recognizes 'Lys-63'-linked ubiquitinated histones H2A and H2AX at DNA lesions sites, leading to target the BRCA1-BARD1 heterodimer to sites of DNA damage at double-strand breaks (DSBs). The BRCA1-A complex also possesses deubiquitinase activity that specifically removes 'Lys-63'-linked ubiquitin on histones H2A and H2AX. In the BRCA1-A complex, it acts as an adapter that bridges the interaction between BABAM1/NBA1 and the rest of the complex, thereby being required for the complex integrity and modulating the E3 ubiquitin ligase activity of the BRCA1-BARD1 heterodimer. Component of the BRISC complex, a multiprotein complex that specifically cleaves 'Lys-63'-linked ubiquitin in various substrates. Within the BRISC complex, acts as an adapter that bridges the interaction between BABAM1/NBA1 and the rest of the complex, thereby being required for the complex integrity. The BRISC complex is required for normal mitotic spindle assembly and microtubule attachment to kinetochores via its role in deubiquitinating NUMA1. The BRISC complex plays a role in interferon signaling via its role in the deubiquitination of the interferon receptor IFNAR1; deubiquitination increases IFNAR1 activity by enhancing its stability and cell surface expression. Down-regulates the response to bacterial lipopolysaccharide (LPS) via its role in IFNAR1 deubiquitination. May play a role in homeostasis or cellular differentiation in cells of neural, epithelial and germline origins. May also act as a death receptor-associated anti-apoptotic protein, which inhibits the mitochondrial apoptotic pathway. May regulate TNF-alpha signaling through its interactions with TNFRSF1A; however these effects may be indirect. The polypeptide is BRISC and BRCA1-A complex member 2 (Babam2) (Mus musculus (Mouse)).